A 35-amino-acid chain; its full sequence is MSDIN-like toxin proprotein 1 (35 aa).

A propeptide spanning residues 1-10 (MSDINATRLP) is cleaved from the precursor. A cross-link (cyclopeptide (Ile-Pro)) is located at residues 11-20 (IIIVLGLIIP). Positions 21–35 (LCVSDIEMILTRGER) are excised as a propeptide.

Belongs to the MSDIN fungal toxin family. Processed by the macrocyclase-peptidase enzyme POPB to yield a toxic cyclic decapeptide. POPB first removes 10 residues from the N-terminus. Conformational trapping of the remaining peptide forces the enzyme to release this intermediate rather than proceed to macrocyclization. The enzyme rebinds the remaining peptide in a different conformation and catalyzes macrocyclization of the N-terminal 10 residues.

In terms of biological role, probable toxin that belongs to the MSDIN-like toxin family responsible for a large number of food poisoning cases and deaths. This Amanita rimosa protein is MSDIN-like toxin proprotein 1.